The chain runs to 253 residues: Sulfate transporter CysZ (253 aa).

Helical transmembrane passes span 31–51 (FVIL…WWLF), 75–95 (LLWP…FSTI), 151–171 (IVLL…PVLW), and 222–242 (IPLL…AMWV).

This sequence belongs to the CysZ family.

Its subcellular location is the cell inner membrane. Functionally, high affinity, high specificity proton-dependent sulfate transporter, which mediates sulfate uptake. Provides the sulfur source for the cysteine synthesis pathway. The polypeptide is Sulfate transporter CysZ (Shigella flexneri serotype 5b (strain 8401)).